The chain runs to 212 residues: Casparian strip membrane protein 1 (212 aa).

A disordered region spans residues 1-28 (MDSSNSTKETGDIPIPVTSSKSSKAAPP). Residues 1-49 (MDSSNSTKETGDIPIPVTSSKSSKAAPPPVVAAKAKSTTKQPLVSGWKR) are Cytoplasmic-facing. Positions 16 to 28 (PVTSSKSSKAAPP) are enriched in low complexity. The chain crosses the membrane as a helical span at residues 50 to 70 (GLGIIDFILRICAIAAALAAA). Residues 71–100 (TAMGTTSQQLPFFTQFFQFKADYNDLPAFT) lie on the Extracellular side of the membrane. The helical transmembrane segment at 101-121 (FFVIANAMAGAYLVLSLPFSI) threads the bilayer. The Cytoplasmic portion of the chain corresponds to 122-133 (LCIVRPHILGAR). Residues 134 to 154 (LMLLVFDTVAVPLVTAAASAA) form a helical membrane-spanning segment. Over 155-186 (ASIVYLAHNGNSDANWVAICRQFNDFCQRVSG) the chain is Extracellular. Residues 187–207 (AVVASFITALLFVVLVAVSAV) traverse the membrane as a helical segment. The Cytoplasmic segment spans residues 208-212 (ALRQK).

Belongs to the Casparian strip membrane proteins (CASP) family. In terms of assembly, homodimer and heterodimers.

The protein localises to the cell membrane. In terms of biological role, regulates membrane-cell wall junctions and localized cell wall deposition. Required for establishment of the Casparian strip membrane domain (CSD) and the subsequent formation of Casparian strips, a cell wall modification of the root endodermis that determines an apoplastic barrier between the intraorganismal apoplasm and the extraorganismal apoplasm and prevents lateral diffusion. This is Casparian strip membrane protein 1 from Helianthus annuus (Common sunflower).